The chain runs to 144 residues: Large ribosomal subunit protein uL16 (144 aa).

This sequence belongs to the universal ribosomal protein uL16 family. As to quaternary structure, part of the 50S ribosomal subunit.

In terms of biological role, binds 23S rRNA and is also seen to make contacts with the A and possibly P site tRNAs. This Bacillus subtilis (strain 168) protein is Large ribosomal subunit protein uL16.